The primary structure comprises 201 residues: dTTP/UTP pyrophosphatase (201 aa).

Residue D81 is the Proton acceptor of the active site.

This sequence belongs to the Maf family. YhdE subfamily. The cofactor is a divalent metal cation.

The protein resides in the cytoplasm. It carries out the reaction dTTP + H2O = dTMP + diphosphate + H(+). The enzyme catalyses UTP + H2O = UMP + diphosphate + H(+). Its function is as follows. Nucleoside triphosphate pyrophosphatase that hydrolyzes dTTP and UTP. May have a dual role in cell division arrest and in preventing the incorporation of modified nucleotides into cellular nucleic acids. In Bordetella avium (strain 197N), this protein is dTTP/UTP pyrophosphatase.